A 153-amino-acid polypeptide reads, in one-letter code: Protein ripply2.2 (153 aa).

The WRPW motif; required for transcriptional repression and interaction with tle4 motif lies at 58-61 (WRPW). The tract at residues 93 to 128 (HPVRLFWPKSKLLDNTYQEAADLLRNFPVQATISLY) is ripply homology domain. Positions 127–153 (LYNDSESDTDNEEDSSEEEQDSGFESE) are disordered. Positions 131-153 (SESDTDNEEDSSEEEQDSGFESE) are enriched in acidic residues.

The protein belongs to the ripply family. Interacts with tle4 and tbx6, and mediates interaction between these proteins. As to expression, expressed in the presomitic mesoderm (PSM) in the anterior halves of somitomeres S-I, S-II and S-III.

Its subcellular location is the nucleus. Required during somitogenesis for the formation of somite boundaries. Represses the expression of genes involved in somite segmentation by acting with the corepressor tle4 to down-regulate the transcriptional activity of tbx6. May act by regulating the activity of tle4. Represses transcription of delta2, thy1 and ripply2.2/bowline itself. The protein is Protein ripply2.2 (ripply2.2) of Xenopus laevis (African clawed frog).